A 363-amino-acid chain; its full sequence is Fructose-bisphosphate aldolase A (363 aa).

R43 provides a ligand contact to beta-D-fructose 1,6-bisphosphate. E188 functions as the Proton acceptor in the catalytic mechanism. K230 acts as the Schiff-base intermediate with dihydroxyacetone-P in catalysis. Beta-D-fructose 1,6-bisphosphate contacts are provided by residues 272-274 (SGG), S301, and R304.

Belongs to the class I fructose-bisphosphate aldolase family. In terms of assembly, tetramer.

The enzyme catalyses beta-D-fructose 1,6-bisphosphate = D-glyceraldehyde 3-phosphate + dihydroxyacetone phosphate. It participates in carbohydrate degradation; glycolysis; D-glyceraldehyde 3-phosphate and glycerone phosphate from D-glucose: step 4/4. Functionally, plays a key role in glycolysis and gluconeogenesis. The sequence is that of Fructose-bisphosphate aldolase A from Salmo salar (Atlantic salmon).